The following is a 211-amino-acid chain: Probable nicotinate-nucleotide adenylyltransferase (211 aa).

It belongs to the NadD family.

It catalyses the reaction nicotinate beta-D-ribonucleotide + ATP + H(+) = deamido-NAD(+) + diphosphate. The protein operates within cofactor biosynthesis; NAD(+) biosynthesis; deamido-NAD(+) from nicotinate D-ribonucleotide: step 1/1. In terms of biological role, catalyzes the reversible adenylation of nicotinate mononucleotide (NaMN) to nicotinic acid adenine dinucleotide (NaAD). The polypeptide is Probable nicotinate-nucleotide adenylyltransferase (Cellvibrio japonicus (strain Ueda107) (Pseudomonas fluorescens subsp. cellulosa)).